The chain runs to 307 residues: Transcription initiation factor IIB (307 aa).

2 tandem repeats follow at residues 123–206 and 217–298.

Belongs to the TFIIB family.

Its function is as follows. Stabilizes TBP binding to an archaeal box-A promoter. Also responsible for recruiting RNA polymerase II to the pre-initiation complex (DNA-TBP-TFIIB). This is Transcription initiation factor IIB from Sulfolobus acidocaldarius (strain ATCC 33909 / DSM 639 / JCM 8929 / NBRC 15157 / NCIMB 11770).